A 444-amino-acid polypeptide reads, in one-letter code: 3-isopropylmalate dehydratase large subunit (444 aa).

Residues cysteine 348, cysteine 408, and cysteine 411 each contribute to the [4Fe-4S] cluster site.

Belongs to the aconitase/IPM isomerase family. LeuC type 1 subfamily. In terms of assembly, heterodimer of LeuC and LeuD. [4Fe-4S] cluster is required as a cofactor.

It catalyses the reaction (2R,3S)-3-isopropylmalate = (2S)-2-isopropylmalate. The protein operates within amino-acid biosynthesis; L-leucine biosynthesis; L-leucine from 3-methyl-2-oxobutanoate: step 2/4. In terms of biological role, catalyzes the isomerization between 2-isopropylmalate and 3-isopropylmalate, via the formation of 2-isopropylmaleate. In Buchnera aphidicola subsp. Uroleucon ambrosiae, this protein is 3-isopropylmalate dehydratase large subunit.